Reading from the N-terminus, the 107-residue chain is Large ribosomal subunit protein P1 (107 aa).

Low complexity predominate over residues 67–82 (PTATSAAAAPAAGEAS). The tract at residues 67-107 (PTATSAAAAPAAGEASGKAEEKKKEEPEEEGDDDMGFGLFD) is disordered. The segment covering 83 to 92 (GKAEEKKKEE) has biased composition (basic and acidic residues).

This sequence belongs to the eukaryotic ribosomal protein P1/P2 family. As to quaternary structure, P1 and P2 exist as dimers at the large ribosomal subunit.

Functionally, plays an important role in the elongation step of protein synthesis. This Leishmania peruviana protein is Large ribosomal subunit protein P1.